A 41-amino-acid polypeptide reads, in one-letter code: Conotoxin Ac4.2 (41 aa).

A propeptide spanning residues 1 to 11 (FDGRNAAVNER) is cleaved from the precursor. At P13 the chain carries 4-hydroxyproline. Residues T18 and T20 are each glycosylated (O-linked (HexNAc...) threonine). A 4-hydroxyproline mark is found at P29 and P33. A Cysteine amide modification is found at C40.

Belongs to the conotoxin A superfamily. In terms of processing, contains 3 disulfide bonds. As to expression, expressed by the venom duct.

It is found in the secreted. Probable neurotoxin with ion channel inhibitor activity. The protein is Conotoxin Ac4.2 of Conus achatinus (Little frog cone).